A 412-amino-acid polypeptide reads, in one-letter code: L-threonine:uridine-5'-aldehyde transaldolase (412 aa).

The residue at position 229 (Lys229) is an N6-(pyridoxal phosphate)lysine.

It belongs to the SHMT family. The cofactor is pyridoxal 5'-phosphate.

The catalysed reaction is uridine-5'-aldehyde + L-threonine = (5'S,6'S)-C-glycyluridine + acetaldehyde. Its pathway is antibiotic biosynthesis. In terms of biological role, transaldolase involved in the biosynthesis of the capuramycin-type nucleoside antibiotic A-102395. Catalyzes the condensation of L-threonine and uridine-5'-aldehyde to form 5'-C-glycyluridine (GlyU). The sequence is that of L-threonine:uridine-5'-aldehyde transaldolase from Amycolatopsis sp.